The chain runs to 152 residues: UPF0266 membrane protein KPK_1957 (152 aa).

3 helical membrane passes run 6–26 (LVIILFILALLAYAVYDQFIM), 45–65 (VDGLIFVGLTAILIYNNITQH), and 67–87 (TPITTWLLSALALMGLYLFWI).

It belongs to the UPF0266 family.

It localises to the cell inner membrane. The chain is UPF0266 membrane protein KPK_1957 from Klebsiella pneumoniae (strain 342).